We begin with the raw amino-acid sequence, 391 residues long: G-patch domain-containing protein 1 (391 aa).

Positions 15 to 61 constitute a G-patch domain; it reads KDSAAFKLMKSMGWEEGEGLGKDKQGIKGYVRVTNKQDTSGVGLDKP. 2 disordered regions span residues 80–132 and 212–307; these read VQAA…EKGK and KASE…PAKR. Composition is skewed to acidic residues over residues 92-102 and 265-295; these read DDSDKEDESED and NSDDDDDDDDDDDEEDEEEDEDESEADDDDK. Positions 305 to 312 match the Nuclear localization signal motif; the sequence is AKRKHDEI.

Strongly expressed in tissues with high cell proliferation activity that have a high demand for ribosome production such as shoot tips, leaves primordia, root tips and floral buds.

The protein resides in the nucleus. It is found in the nucleolus. In terms of biological role, involved in ribosome biogenesis, required for normal progression of rRNA processing. Seems to promote cell proliferation in leaves. The protein is G-patch domain-containing protein 1 of Arabidopsis thaliana (Mouse-ear cress).